A 186-amino-acid chain; its full sequence is Transcriptional repressor NrdR (186 aa).

A zinc finger lies at 3 to 34; that stretch reads CPFCRHPDSRVVDSREAEEGAAIRRRRSCPAC. Positions 46–136 constitute an ATP-cone domain; the sequence is LRVRKRSGAT…VYLAFESLGD (91 aa). A disordered region spans residues 149-169; sequence AGGGEPPVAGKPTTMPAATGA.

This sequence belongs to the NrdR family. It depends on Zn(2+) as a cofactor.

Functionally, negatively regulates transcription of bacterial ribonucleotide reductase nrd genes and operons by binding to NrdR-boxes. This Parafrankia sp. (strain EAN1pec) protein is Transcriptional repressor NrdR.